The chain runs to 345 residues: Polyprenyl transferase dpmpC (345 aa).

8 consecutive transmembrane segments (helical) span residues 24–44 (PVFA…ARLA), 60–80 (GLCF…NDWV), 101–121 (VTTF…WYLL), 183–203 (LYVY…VIGW), 220–240 (CLPL…AYSY), 261–281 (HLHL…LLFL), 286–306 (SFWL…EQLI), and 319–339 (LHKS…VELL).

Belongs to the UbiA prenyltransferase family. It depends on Mg(2+) as a cofactor.

It is found in the membrane. The protein operates within secondary metabolite biosynthesis; terpenoid biosynthesis. Polyprenyl transferase; part of the gene cluster that mediates the biosynthesis of diterpenoid pyrones. The first step of the pathway is the synthesis of the alpha-pyrone moiety by the polyketide synthase dpmpA via condensation of one acetyl-CoA starter unit with 3 malonyl-CoA units and 2 methylations. The alpha-pyrone is then combined with geranylgeranyl pyrophosphate (GGPP) formed by the GGPP synthase dpmpD through the action of the prenyltransferase dpmpC to yield a linear alpha-pyrone diterpenoid. Subsequent steps in the diterpenoid pyrone biosynthetic pathway involve the decalin core formation, which is initiated by the epoxidation of the C10-C11 olefin by the FAD-dependent oxidoreductase dpmpE, and is followed by a cyclization cascade catalyzed by the terpene cyclase dpmpB. The short chain dehydrogenase/reductase dpmpG then oxidizes the 8S hydroxy group to a ketone and the short chain dehydrogenase/reductase dpmpH reduces the ketone to the 8R hydroxy group to yield higginsianin B. Higginsianin B is further methylated by the methyltransferase dpmpI to produce the intermediate named FDDP B. The cytochrome P450 monooxygenase dpmpJ then oxidizes the C-26 methyl to primary alcohol, producing the final diterpenoid pyrone with a C-26 primary alcohol on the gamma-pyrone moiety named FDDP C. The chain is Polyprenyl transferase dpmpC from Macrophomina phaseolina (strain MS6) (Charcoal rot fungus).